Consider the following 200-residue polypeptide: Large ribosomal subunit protein uL4 (200 aa).

The disordered stretch occupies residues 43–71 (RAQKTRAEVSGSGKKPWRQKGTGRARSGD).

This sequence belongs to the universal ribosomal protein uL4 family. In terms of assembly, part of the 50S ribosomal subunit.

Its function is as follows. One of the primary rRNA binding proteins, this protein initially binds near the 5'-end of the 23S rRNA. It is important during the early stages of 50S assembly. It makes multiple contacts with different domains of the 23S rRNA in the assembled 50S subunit and ribosome. Functionally, forms part of the polypeptide exit tunnel. This chain is Large ribosomal subunit protein uL4, found in Histophilus somni (strain 2336) (Haemophilus somnus).